The chain runs to 186 residues: Adrenodoxin, mitochondrial (186 aa).

The transit peptide at Met-1 to Trp-58 directs the protein to the mitochondrion. Ser-61 carries the post-translational modification Phosphoserine. Lys-64 is modified (N6-acetyllysine; alternate). Lys-64 bears the N6-succinyllysine; alternate mark. Residues Ile-65–Val-169 form the 2Fe-2S ferredoxin-type domain. [2Fe-2S] cluster contacts are provided by Cys-104, Cys-110, Cys-113, and Cys-150. The residue at position 156 (Lys-156) is an N6-succinyllysine. Ser-175 bears the Phosphoserine mark.

Belongs to the adrenodoxin/putidaredoxin family. In terms of assembly, interacts with CYP11A1. [2Fe-2S] cluster is required as a cofactor.

Its subcellular location is the mitochondrion matrix. Essential for the synthesis of various steroid hormones. Participates in the reduction of mitochondrial cytochrome P450 for steroidogenesis. Transfers electrons from adrenodoxin reductase to CYP11A1, a cytochrome P450 that catalyzes cholesterol side-chain cleavage. Does not form a ternary complex with adrenodoxin reductase and CYP11A1 but shuttles between the two enzymes to transfer electrons. This Sus scrofa (Pig) protein is Adrenodoxin, mitochondrial (FDX1).